The sequence spans 459 residues: Chromosomal replication initiator protein DnaA (459 aa).

The domain I, interacts with DnaA modulators stretch occupies residues 1 to 74 (MQKIETFWHF…DEMAQDHFNE (74 aa)). A domain II region spans residues 74–122 (ERISFRLELREPAESEAQTVRTSAQKNREDKKPAAEKTQGVTSRKTNPS). A disordered region spans residues 87–122 (ESEAQTVRTSAQKNREDKKPAAEKTQGVTSRKTNPS). The segment covering 89 to 98 (EAQTVRTSAQ) has biased composition (polar residues). Basic and acidic residues predominate over residues 99–108 (KNREDKKPAA). Residues 112–122 (QGVTSRKTNPS) show a composition bias toward polar residues. The segment at 123–339 (QLNASFTFDA…GALKRVLAFS (217 aa)) is domain III, AAA+ region. Residues Gly167, Gly169, Lys170, and Thr171 each contribute to the ATP site. Residues 340–459 (RFTGHSISLD…FNALMHILRG (120 aa)) form a domain IV, binds dsDNA region.

The protein belongs to the DnaA family. Oligomerizes as a right-handed, spiral filament on DNA at oriC.

Its subcellular location is the cytoplasm. In terms of biological role, plays an essential role in the initiation and regulation of chromosomal replication. ATP-DnaA binds to the origin of replication (oriC) to initiate formation of the DNA replication initiation complex once per cell cycle. Binds the DnaA box (a 9 base pair repeat at the origin) and separates the double-stranded (ds)DNA. Forms a right-handed helical filament on oriC DNA; dsDNA binds to the exterior of the filament while single-stranded (ss)DNA is stabiized in the filament's interior. The ATP-DnaA-oriC complex binds and stabilizes one strand of the AT-rich DNA unwinding element (DUE), permitting loading of DNA polymerase. After initiation quickly degrades to an ADP-DnaA complex that is not apt for DNA replication. Binds acidic phospholipids. This Nitrosomonas europaea (strain ATCC 19718 / CIP 103999 / KCTC 2705 / NBRC 14298) protein is Chromosomal replication initiator protein DnaA.